Reading from the N-terminus, the 203-residue chain is dITP/XTP pyrophosphatase (203 aa).

Thr-8–Lys-13 lines the substrate pocket. Glu-41 and Asp-70 together coordinate Mg(2+). Residue Asp-70 is the Proton acceptor of the active site. Residues Ser-71, Phe-153–Asp-156, Lys-176, and His-181–Arg-182 each bind substrate.

The protein belongs to the HAM1 NTPase family. In terms of assembly, homodimer. Mg(2+) serves as cofactor.

The enzyme catalyses XTP + H2O = XMP + diphosphate + H(+). It catalyses the reaction dITP + H2O = dIMP + diphosphate + H(+). The catalysed reaction is ITP + H2O = IMP + diphosphate + H(+). Its function is as follows. Pyrophosphatase that catalyzes the hydrolysis of nucleoside triphosphates to their monophosphate derivatives, with a high preference for the non-canonical purine nucleotides XTP (xanthosine triphosphate), dITP (deoxyinosine triphosphate) and ITP. Seems to function as a house-cleaning enzyme that removes non-canonical purine nucleotides from the nucleotide pool, thus preventing their incorporation into DNA/RNA and avoiding chromosomal lesions. This Listeria monocytogenes serovar 1/2a (strain ATCC BAA-679 / EGD-e) protein is dITP/XTP pyrophosphatase.